The primary structure comprises 660 residues: FAST kinase domain-containing protein 3, mitochondrial (660 aa).

Residues 1–57 (MALVTLRRNLYHLSDFRIHGALAALKTQQVNHVHKTVKEHLCPWFWSQHPGPIRVRF) constitute a mitochondrion transit peptide. The region spanning 591-649 (VALCIDGPKRFCLNSKHLLGKEATKQRHLRLLGYQVVQIPYYEIEMLKSRLELVDYLQG) is the RAP domain.

It belongs to the FAST kinase family.

Its subcellular location is the mitochondrion. Required for normal mitochondrial respiration. Increases steady-state levels and half-lives of a subset of mature mitochondrial mRNAs MT-ND2, MT-ND3, MT-CYTB, MT-CO2, and MT-ATP8/6. Promotes MT-CO1 mRNA translation and increases mitochondrial complex IV assembly and activity. The protein is FAST kinase domain-containing protein 3, mitochondrial (FASTKD3) of Bos taurus (Bovine).